The chain runs to 60 residues: Toxin 4.9.6 (60 aa).

Intrachain disulfides connect Cys-3–Cys-22, Cys-17–Cys-38, Cys-40–Cys-52, and Cys-53–Cys-58.

This sequence belongs to the three-finger toxin family. Short-chain subfamily. Orphan group XI sub-subfamily. In terms of tissue distribution, expressed by the venom gland.

It is found in the secreted. This chain is Toxin 4.9.6, found in Dendroaspis viridis (Western green mamba).